Here is a 101-residue protein sequence, read N- to C-terminus: Protein Tat (101 aa).

Over residues 1–12 (MEPVDPRLEPWK) the composition is skewed to basic and acidic residues. The tract at residues 1–24 (MEPVDPRLEPWKHPGSQPKTASNN) is disordered. The segment at 1–24 (MEPVDPRLEPWKHPGSQPKTASNN) is interaction with human CREBBP. Residues 1–48 (MEPVDPRLEPWKHPGSQPKTASNNCYCKRCCLHCQVCFTKKGLGISYG) form a transactivation region. The tract at residues 22–37 (SNNCYCKRCCLHCQVC) is cysteine-rich. Zn(2+) is bound by residues C25 and C27. K28 bears the N6-acetyllysine; by host PCAF mark. Zn(2+) contacts are provided by C30, H33, C34, and C37. The interval 38 to 48 (FTKKGLGISYG) is core. Positions 45–101 (ISYGRKKRRQRRRAPQDSKTHQVSLSKQPASQPRGDPTGPKESKKKVERETETDPED) are disordered. Over residues 48-57 (GRKKRRQRRR) the composition is skewed to basic residues. The Nuclear localization signal, RNA-binding (TAR), and protein transduction signature appears at 49-57 (RKKRRQRRR). Residues 49 to 86 (RKKRRQRRRAPQDSKTHQVSLSKQPASQPRGDPTGPKE) form an interaction with the host capping enzyme RNGTT region. Residues K50 and K51 each carry the N6-acetyllysine; by host EP300 and GCN5L2 modification. 2 positions are modified to asymmetric dimethylarginine; by host PRMT6: R52 and R53. Over residues 65-75 (HQVSLSKQPAS) the composition is skewed to polar residues. A Glycyl lysine isopeptide (Lys-Gly) (interchain with G-Cter in ubiquitin) cross-link involves residue K71. A Cell attachment site motif is present at residues 78 to 80 (RGD). Basic and acidic residues predominate over residues 83-101 (GPKESKKKVERETETDPED).

This sequence belongs to the lentiviruses Tat family. Interacts with host CCNT1. Associates with the P-TEFb complex composed at least of Tat, P-TEFb (CDK9 and CCNT1), TAR RNA, RNA Pol II. Recruits the HATs CREBBP, TAF1/TFIID, EP300, PCAF and GCN5L2. Interacts with host KAT5/Tip60; this interaction targets the latter to degradation. Interacts with the host deacetylase SIRT1. Interacts with host capping enzyme RNGTT; this interaction stimulates RNGTT. Binds to host KDR, and to the host integrins ITGAV/ITGB3 and ITGA5/ITGB1. Interacts with host KPNB1/importin beta-1 without previous binding to KPNA1/importin alpha-1. Interacts with EIF2AK2. Interacts with host nucleosome assembly protein NAP1L1; this interaction may be required for the transport of Tat within the nucleus, since the two proteins interact at the nuclear rim. Interacts with host C1QBP/SF2P32; this interaction involves lysine-acetylated Tat. Interacts with the host chemokine receptors CCR2, CCR3 and CXCR4. Interacts with host DPP4/CD26; this interaction may trigger an anti-proliferative effect. Interacts with host LDLR. Interacts with the host extracellular matrix metalloproteinase MMP1. Interacts with host PRMT6; this interaction mediates Tat's methylation. Interacts with, and is ubiquitinated by MDM2/Hdm2. Interacts with host PSMC3 and HTATIP2. Interacts with STAB1; this interaction may overcome SATB1-mediated repression of IL2 and IL2RA (interleukin) in T cells by binding to the same domain than HDAC1. Interacts (when acetylated) with human CDK13, thereby increasing HIV-1 mRNA splicing and promoting the production of the doubly spliced HIV-1 protein Nef. Interacts with host TBP; this interaction modulates the activity of transcriptional pre-initiation complex. Interacts with host RELA. Interacts with host PLSCR1; this interaction negatively regulates Tat transactivation activity by altering its subcellular distribution. Asymmetrical arginine methylation by host PRMT6 seems to diminish the transactivation capacity of Tat and affects the interaction with host CCNT1. Post-translationally, acetylation by EP300, CREBBP, GCN5L2/GCN5 and PCAF regulates the transactivation activity of Tat. EP300-mediated acetylation of Lys-50 promotes dissociation of Tat from the TAR RNA through the competitive binding to PCAF's bromodomain. In addition, the non-acetylated Tat's N-terminus can also interact with PCAF. PCAF-mediated acetylation of Lys-28 enhances Tat's binding to CCNT1. Lys-50 is deacetylated by SIRT1. In terms of processing, polyubiquitination by host MDM2 does not target Tat to degradation, but activates its transactivation function and fosters interaction with CCNT1 and TAR RNA. Phosphorylated by EIF2AK2 on serine and threonine residues adjacent to the basic region important for TAR RNA binding and function. Phosphorylation of Tat by EIF2AK2 is dependent on the prior activation of EIF2AK2 by dsRNA.

It is found in the host nucleus. Its subcellular location is the host nucleolus. It localises to the host cytoplasm. The protein localises to the secreted. Transcriptional activator that increases RNA Pol II processivity, thereby increasing the level of full-length viral transcripts. Recognizes a hairpin structure at the 5'-LTR of the nascent viral mRNAs referred to as the transactivation responsive RNA element (TAR) and recruits the cyclin T1-CDK9 complex (P-TEFb complex) that will in turn hyperphosphorylate the RNA polymerase II to allow efficient elongation. The CDK9 component of P-TEFb and other Tat-activated kinases hyperphosphorylate the C-terminus of RNA Pol II that becomes stabilized and much more processive. Other factors such as HTATSF1/Tat-SF1, SUPT5H/SPT5, and HTATIP2 are also important for Tat's function. Besides its effect on RNA Pol II processivity, Tat induces chromatin remodeling of proviral genes by recruiting the histone acetyltransferases (HATs) CREBBP, EP300 and PCAF to the chromatin. This also contributes to the increase in proviral transcription rate, especially when the provirus integrates in transcriptionally silent region of the host genome. To ensure maximal activation of the LTR, Tat mediates nuclear translocation of NF-kappa-B by interacting with host RELA. Through its interaction with host TBP, Tat may also modulate transcription initiation. Tat can reactivate a latently infected cell by penetrating in it and transactivating its LTR promoter. In the cytoplasm, Tat is thought to act as a translational activator of HIV-1 mRNAs. In terms of biological role, extracellular circulating Tat can be endocytosed by surrounding uninfected cells via the binding to several surface receptors such as CD26, CXCR4, heparan sulfate proteoglycans (HSPG) or LDLR. Neurons are rarely infected, but they internalize Tat via their LDLR. Through its interaction with nuclear HATs, Tat is potentially able to control the acetylation-dependent cellular gene expression. Modulates the expression of many cellular genes involved in cell survival, proliferation or in coding for cytokines or cytokine receptors. Tat plays a role in T-cell and neurons apoptosis. Tat induced neurotoxicity and apoptosis probably contribute to neuroAIDS. Circulating Tat also acts as a chemokine-like and/or growth factor-like molecule that binds to specific receptors on the surface of the cells, affecting many cellular pathways. In the vascular system, Tat binds to ITGAV/ITGB3 and ITGA5/ITGB1 integrins dimers at the surface of endothelial cells and competes with bFGF for heparin-binding sites, leading to an excess of soluble bFGF. The sequence is that of Protein Tat from Homo sapiens (Human).